Consider the following 315-residue polypeptide: Ribonuclease HII (315 aa).

The RNase H type-2 domain occupies 78–267; that stretch reads TLVAGVDEAG…VREALGLAPL (190 aa). A divalent metal cation is bound by residues Asp84, Glu85, and Asp176. The disordered stretch occupies residues 273–292; it reads APPPESAAEPGGEGAIAGIA. Residues 278–292 show a composition bias toward low complexity; sequence SAAEPGGEGAIAGIA.

This sequence belongs to the RNase HII family. The cofactor is Mn(2+). Mg(2+) is required as a cofactor.

The protein resides in the cytoplasm. The catalysed reaction is Endonucleolytic cleavage to 5'-phosphomonoester.. In terms of biological role, endonuclease that specifically degrades the RNA of RNA-DNA hybrids. The protein is Ribonuclease HII of Anaeromyxobacter sp. (strain Fw109-5).